The following is a 421-amino-acid chain: Testin (421 aa).

One can recognise a PET domain in the interval 92-199; that stretch reads MILTNPVAAK…GDVKLPRDMN (108 aa). Disordered stretches follow at residues 133-164 and 193-213; these read EKQPVAGSEGAQYRKKQLAKQLPAHDQDPSKC and KLPRDMNTQGPNRMYIPGGDR. The span at 155-164 shows a compositional bias: basic and acidic residues; it reads PAHDQDPSKC. LIM zinc-binding domains lie at 234–297, 299–359, and 362–421; these read YSCY…CDSE, PRCA…NHAV, and QGCH…KMMS.

Belongs to the prickle / espinas / testin family. In terms of assembly, interacts via LIM domain 1 with ZYX. Interacts (via LIM domain 3) with ENAH and VASP. Interacts with ALKBH4, talin, actin, alpha-actinin, GRIP1 and PXN. Interacts (via LIM domain 2) with ACTL7A (via N-terminus). Heterodimer with ACTL7A; the heterodimer interacts with ENAH to form a heterotrimer.

It is found in the cytoplasm. Its subcellular location is the cell junction. The protein resides in the focal adhesion. In terms of biological role, scaffold protein that may play a role in cell adhesion, cell spreading and in the reorganization of the actin cytoskeleton. Plays a role in the regulation of cell proliferation. May act as a tumor suppressor. This is Testin (TES) from Muntiacus muntjak (Barking deer).